We begin with the raw amino-acid sequence, 132 residues long: Glycine cleavage system H protein (132 aa).

The Lipoyl-binding domain occupies 24-107 (TATIGLSAFA…GEEGWLIKVR (84 aa)). Lys65 is modified (N6-lipoyllysine).

This sequence belongs to the GcvH family. As to quaternary structure, the glycine cleavage system is composed of four proteins: P, T, L and H. It depends on (R)-lipoate as a cofactor.

Functionally, the glycine cleavage system catalyzes the degradation of glycine. The H protein shuttles the methylamine group of glycine from the P protein to the T protein. The chain is Glycine cleavage system H protein from Synechocystis sp. (strain ATCC 27184 / PCC 6803 / Kazusa).